A 432-amino-acid chain; its full sequence is 2-oxoglutarate-dependent dioxygenase AOP2 (432 aa).

The Fe2OG dioxygenase domain maps to 281 to 378 (SGDDVEANDD…RYTAAIFTCP (98 aa)). His301, Asp303, and His358 together coordinate Fe cation. 2-oxoglutarate is bound at residue Arg369.

The protein belongs to the iron/ascorbate-dependent oxidoreductase family. Requires Fe(2+) as cofactor.

Its function is as follows. 2-oxoglutarate-dependent dioxygenase involved in glucosinolates biosynthesis. Catalyzes the conversion of methylsulfinylalkyl glucosinolates to alkenyl glucosinolates. This Arabidopsis thaliana (Mouse-ear cress) protein is 2-oxoglutarate-dependent dioxygenase AOP2 (AOP2).